Reading from the N-terminus, the 345-residue chain is Myb/SANT-like DNA-binding domain-containing protein 4 (345 aa).

Residues 4–77 (LKRKRKSNFS…EVKRRYLDWR (74 aa)) enclose the Myb-like domain. Lys9 participates in a covalent cross-link: Glycyl lysine isopeptide (Lys-Gly) (interchain with G-Cter in SUMO2). The residue at position 106 (Ser106) is a Phosphoserine. Residues Lys114 and Lys142 each participate in a glycyl lysine isopeptide (Lys-Gly) (interchain with G-Cter in SUMO2) cross-link. Positions 141-175 (VKVEEEERDPQSPEFEIEEEEEMLSSVIPDSRREN) are disordered. Thr188 carries the phosphothreonine modification. Positions 202–344 (HLLMNIEKQK…RLRIQKEGHL (143 aa)) form a coiled coil. Glycyl lysine isopeptide (Lys-Gly) (interchain with G-Cter in SUMO2) cross-links involve residues Lys237, Lys254, and Lys273.

In Rattus norvegicus (Rat), this protein is Myb/SANT-like DNA-binding domain-containing protein 4 (Msantd4).